The following is a 261-amino-acid chain: Protein unc-50 homolog (261 aa).

6 helical membrane passes run 37 to 57 (IFHYPQMDIEYTFWIMFYLCF), 82 to 102 (AFAVILVFFMAIASMSYAITF), 113 to 133 (VMFWAVFVDFITVGLLIATIG), 166 to 186 (SFFPLFIILYVVQFFLLPILL), 190 to 210 (LFAAILSNTLYIIGFSYYYYV), and 225 to 245 (VVFLYPIGILFALYIVSVVMG).

It belongs to the unc-50 family.

The protein resides in the membrane. The polypeptide is Protein unc-50 homolog (Dictyostelium discoideum (Social amoeba)).